A 60-amino-acid chain; its full sequence is MGVKKEKGRKRFRKRKTFGNQILPLELLIEKNKREIINSAELMEEIYMKIDEKHTQCVTK.

The segment at residues 11-31 (RFRKRKTFGNQILPLELLIEK) is a DNA-binding region (H-T-H motif).

This sequence to B.subtilis SenS.

Functionally, regulates the expression of extracellular-protein genes of Bacillus natto. This chain is Transcriptional regulatory protein SenN (senN), found in Bacillus subtilis subsp. natto.